The chain runs to 83 residues: Exodeoxyribonuclease 7 small subunit (83 aa).

It belongs to the XseB family. As to quaternary structure, heterooligomer composed of large and small subunits.

It is found in the cytoplasm. The catalysed reaction is Exonucleolytic cleavage in either 5'- to 3'- or 3'- to 5'-direction to yield nucleoside 5'-phosphates.. In terms of biological role, bidirectionally degrades single-stranded DNA into large acid-insoluble oligonucleotides, which are then degraded further into small acid-soluble oligonucleotides. In Rhodopseudomonas palustris (strain HaA2), this protein is Exodeoxyribonuclease 7 small subunit.